The chain runs to 315 residues: MASDQLRFLGSLEGHKGWVTAIATSQENPDMILTASRDKTIIVWQLTRDEDSYGYPKRILTGHNHFVSDVVISSDGQFALSSSWDHTLRLWDLNTGATTRRFVGHTSDVLSVSFSADNRQIVSGSRDKTIKLWNTLGECKYDIKDECHTEWVSCVRFSPNVSNPVIVSCGWDRVVKVWELSKFKLKTNHYGHTGYINTVSVSPDGSLAASGGKDGITMLWDLNEGKHLYSLEAGDIVNALVFSPNRYWLCAATASCVKIFDLESKSIVDELKPAYTDVQDEGRQPECVSIAWSADGQTLFAGFTDNQLRVWTVTS.

WD repeat units follow at residues G14–G54, G62–R101, G104–K144, C147–N188, G191–S230, E232–E270, and G282–S315.

It belongs to the WD repeat G protein beta family. Ribosomal protein RACK1 subfamily.

Its function is as follows. Component of the ribosome, a large ribonucleoprotein complex responsible for the synthesis of proteins in the cell. The small ribosomal subunit (SSU) binds messenger RNAs (mRNAs) and translates the encoded message by selecting cognate aminoacyl-transfer RNA (tRNA) molecules. The large subunit (LSU) contains the ribosomal catalytic site termed the peptidyl transferase center (PTC), which catalyzes the formation of peptide bonds, thereby polymerizing the amino acids delivered by tRNAs into a polypeptide chain. The nascent polypeptides leave the ribosome through a tunnel in the LSU and interact with protein factors that function in enzymatic processing, targeting, and the membrane insertion of nascent chains at the exit of the ribosomal tunnel. Plays in important role in the regulation of vegetative growth and fruiting body development. Especially, positively regulates the expression of genes involved in fruiting body development such as FVFD30 and FVFD16, as well as genes encoding for lectins and hydrophobins. Also regulates the expression of genes involved in cAMP signaling pathway. This Flammulina velutipes (Agaricus velutipes) protein is Cross-pathway control WD-repeat protein 2.